A 654-amino-acid chain; its full sequence is Amyloid beta precursor like protein 1 (654 aa).

An N-terminal signal peptide occupies residues 1 to 38 (MGPTSPAARGQGRRWRPPPLPLLLPLSLLLLRAQLAVG). Topologically, residues 39-584 (NLAVGSPSAA…APSGTGVSRE (546 aa)) are extracellular. Residues 50–146 (APGSAQVAGL…PFHCLPGEFV (97 aa)) form a GFLD subdomain region. The region spanning 50-212 (APGSAQVAGL…RGVEYVCCPP (163 aa)) is the E1 domain. Intrachain disulfides connect C60–C84, C95–C140, C120–C128, C156–C210, C167–C197, and C181–C209. Residues 154 to 212 (EGCRFLHQERMDQCESSTRRHQEAQEACSSQGLILHGSGMLLPCGSDRFRGVEYVCCPP) are cuBD subdomain. H174 serves as a coordination point for Cu(2+). 3 residues coordinate Zn(2+): E206, C209, and C210. The segment at 214-297 (ATPNPSGMAA…VTPTPRPTDG (84 aa)) is disordered. Over residues 262–272 (QAEEEEEEEEE) the composition is skewed to acidic residues. The E2 domain occupies 297–488 (GVDVYFGMPG…QELRPQIQEL (192 aa)). Heparin-binding stretches follow at residues 314-346 (FLRAKMDLEERRMRQINEVMREWAMADSQSKNL) and 414-445 (LMALRRYLRAEQKEQRHTLRHYQHVAAVDPEK). Residues 446-463 (AQQMRFQVQTHLQVIEER) are collagen-binding. A glycan (N-linked (GlcNAc...) asparagine) is linked at N465. The tract at residues 497 to 580 (SELDASVPGS…RDELAPSGTG (84 aa)) is disordered. A compositionally biased stretch (basic and acidic residues) spans 508–523 (SEDKGSLQPPESKDDP). The span at 529-539 (KGSTDQESSSS) shows a compositional bias: polar residues. N-linked (GlcNAc...) asparagine glycosylation is present at N555. Position 565 (H565) interacts with Cu(2+). Zn(2+) is bound at residue H565. The helical transmembrane segment at 585-607 (ALSGLLIMGAGGGSLIVLSLLLL) threads the bilayer. The short motif at 608–619 (RKKKPYGTISHG) is the Basolateral sorting signal element. The Cytoplasmic portion of the chain corresponds to 608–654 (RKKKPYGTISHGVVEVDPMLTLEEQQLRELQRHGYENPTYRFLEERP). Positions 636-652 (ELQRHGYENPTYRFLEE) are interaction with DAB1. Residues 640-654 (HGYENPTYRFLEERP) are interaction with DAB2. Positions 644 to 647 (NPTY) match the NPXY motif; contains endocytosis signal motif.

This sequence belongs to the APP family. As to quaternary structure, monomer and homodimer. Heparin binding promotes homodimerization. Binds, via its C-terminus, to the PID domain of several cytoplasmic proteins, including APBB and APBA family members, MAPK8IP1 and DAB1. Binding to Dab1 inhibits its serine phosphorylation. Interacts with CPEB1. Interacts (via NPXY motif) with DAB2 (via PID domain); the interaction is impaired by tyrosine phosphorylation of the NPXY motif. Interacts (via NPXY motif) with DAB1. Post-translationally, proteolytically cleaved by caspases during neuronal apoptosis. Cleaved, in vitro, at Asp-624 by caspase-3. In terms of processing, N- and O-glycosylated.

It is found in the cell membrane. The protein localises to the cytoplasm. Its function is as follows. May play a role in postsynaptic function. The C-terminal gamma-secretase processed fragment, ALID1, activates transcription activation through APBB1 (Fe65) binding. Couples to JIP signal transduction through C-terminal binding. May interact with cellular G-protein signaling pathways. Can regulate neurite outgrowth through binding to components of the extracellular matrix such as heparin and collagen I. The gamma-CTF peptide, C30, is a potent enhancer of neuronal apoptosis. The sequence is that of Amyloid beta precursor like protein 1 (Aplp1) from Mus musculus (Mouse).